The sequence spans 397 residues: MTTLLNPYFGEFGGMYVPQILMPALRQLEEAFVSAQKDPQFQAQFADLLKNYAGRPTALTKCQNITAGTKTTLYLKREDLLHGGAHKTNQVLGQALLAKRMGKTEIIAETGAGQHGVASALASALLGLKCRIYMGAKDVERQSPNVFRMRLMGAEVIPVHSGSATLKDACNEALRDWSGSYESAHYMLGTAAGPHPFPTIVREFQRMIGEETKAQILEKEGRLPDAVIACVGGGSNAIGMFADFINETSVGLIGVEPGGHGIETGEHGAPLKHGRVGIYFGMKAPMMQTEEGQIEESYSISAGLDFPSVGPQHAYLNSIGRADYVSITDDEALEAFKTLCLHEGIIPALESSHALAHALKMMRENPEKEQLLVVNLSGRGDKDIFTVHDILKARGEI.

N6-(pyridoxal phosphate)lysine is present on K87.

It belongs to the TrpB family. As to quaternary structure, tetramer of two alpha and two beta chains. It depends on pyridoxal 5'-phosphate as a cofactor.

It carries out the reaction (1S,2R)-1-C-(indol-3-yl)glycerol 3-phosphate + L-serine = D-glyceraldehyde 3-phosphate + L-tryptophan + H2O. The protein operates within amino-acid biosynthesis; L-tryptophan biosynthesis; L-tryptophan from chorismate: step 5/5. Functionally, the beta subunit is responsible for the synthesis of L-tryptophan from indole and L-serine. The sequence is that of Tryptophan synthase beta chain from Citrobacter koseri (strain ATCC BAA-895 / CDC 4225-83 / SGSC4696).